A 104-amino-acid chain; its full sequence is Inner membrane protein YjeO (104 aa).

Topologically, residues 1–5 are cytoplasmic; the sequence is MSARM. Residues 6-26 form a helical membrane-spanning segment; that stretch reads FVLCCIWFIVAFLWITITSAL. Topologically, residues 27–52 are periplasmic; the sequence is DKEWMIDGRGINNVCDVLMYLEEDDT. Residues 53–73 traverse the membrane as a helical segment; the sequence is RDVGVIMTLPLFFPFLWFALW. At 74 to 77 the chain is on the cytoplasmic side; sequence RKKR. Residues 78 to 98 traverse the membrane as a helical segment; that stretch reads GWFMYATALAIFGYWLWQFFL. The Periplasmic portion of the chain corresponds to 99–104; the sequence is RYQFCL.

Its subcellular location is the cell inner membrane. This is Inner membrane protein YjeO (yjeO) from Escherichia coli (strain K12).